A 294-amino-acid polypeptide reads, in one-letter code: Retinoic acid receptor responder protein 1 (294 aa).

Residues 1–20 (MQPRRQRLPAPWSGPRGPRP) are Lumenal-facing. Residues 21–42 (TAPLLALLLLLAPVAAPAGSGD) form a helical; Signal-anchor for type III membrane protein membrane-spanning segment. 2 consecutive Cystatin LXN-type domains span residues 38–153 (AGSG…EKKK) and 173–276 (EIVS…TPEE). A glycan (O-linked (Xyl...) (chondroitin sulfate) serine) is linked at Ser-40. Over 43–294 (PDDPGQPQDA…AVVPTELSNF (252 aa)) the chain is Cytoplasmic. Positions 273 to 294 (TPEEASGTEEGSAVVPTELSNF) are disordered.

It belongs to the protease inhibitor I47 (latexin) family. As to quaternary structure, interacts with AGBL2, KIF11 and MAPRE1. Post-translationally, not N-glycosylated. O-glycosylated; contains chondroitin sulfate. Detected in urine (at protein level).

It is found in the membrane. The protein localises to the secreted. Inhibitor of the cytoplasmic carboxypeptidase AGBL2, may regulate the alpha-tubulin tyrosination cycle. The sequence is that of Retinoic acid receptor responder protein 1 (RARRES1) from Homo sapiens (Human).